The sequence spans 227 residues: 7-cyano-7-deazaguanine synthase (227 aa).

Residue 9 to 19 participates in ATP binding; the sequence is LSGGLDSATVL. 4 residues coordinate Zn(2+): cysteine 189, cysteine 199, cysteine 202, and cysteine 205.

It belongs to the QueC family. The cofactor is Zn(2+).

It carries out the reaction 7-carboxy-7-deazaguanine + NH4(+) + ATP = 7-cyano-7-deazaguanine + ADP + phosphate + H2O + H(+). It functions in the pathway purine metabolism; 7-cyano-7-deazaguanine biosynthesis. Functionally, catalyzes the ATP-dependent conversion of 7-carboxy-7-deazaguanine (CDG) to 7-cyano-7-deazaguanine (preQ(0)). In Cupriavidus necator (strain ATCC 17699 / DSM 428 / KCTC 22496 / NCIMB 10442 / H16 / Stanier 337) (Ralstonia eutropha), this protein is 7-cyano-7-deazaguanine synthase.